A 301-amino-acid chain; its full sequence is Galectin-6 (301 aa).

Galectin domains are found at residues 19-149 (YKRP…INFF) and 173-301 (YVGA…YVHI).

The protein is Galectin-6 (Lgals6) of Mus musculus (Mouse).